Here is a 353-residue protein sequence, read N- to C-terminus: 3-dehydroquinate synthase (353 aa).

NAD(+) is bound by residues 60 to 65, 94 to 98, 118 to 119, lysine 131, and lysine 140; these read AGDMNK, GMITD, and TT. Residues glutamate 173, histidine 234, and histidine 253 each coordinate Zn(2+).

It belongs to the sugar phosphate cyclases superfamily. Dehydroquinate synthase family. NAD(+) is required as a cofactor. It depends on Co(2+) as a cofactor. Zn(2+) serves as cofactor.

It localises to the cytoplasm. It carries out the reaction 7-phospho-2-dehydro-3-deoxy-D-arabino-heptonate = 3-dehydroquinate + phosphate. It functions in the pathway metabolic intermediate biosynthesis; chorismate biosynthesis; chorismate from D-erythrose 4-phosphate and phosphoenolpyruvate: step 2/7. In terms of biological role, catalyzes the conversion of 3-deoxy-D-arabino-heptulosonate 7-phosphate (DAHP) to dehydroquinate (DHQ). This Parabacteroides distasonis (strain ATCC 8503 / DSM 20701 / CIP 104284 / JCM 5825 / NCTC 11152) protein is 3-dehydroquinate synthase.